Reading from the N-terminus, the 534-residue chain is NAD(P)H-quinone oxidoreductase subunit 2 (534 aa).

14 helical membrane-spanning segments follow: residues 15–35 (ILPEGIVILTLLGVLIVDLIL), 42–62 (WIGYLAIAGLFTSIVALYFQW), 79–99 (LSIVFRGIIALSAAVTILMSI), 109–129 (LAEFIAILLSATLGGMFLSGA), 132–152 (LVMIFISLETLSISSYLLTGY), 167–187 (LLIGASSTAVFLYGVSLLYGL), 210–230 (LGLVIALVFAIAGIGFKISAA), 244–264 (PTPVIAFLSVGSKAAGFALAI), 280–300 (FVFTALAVLSMILGNVVALAQ), 306–326 (MLAYSSIAQAGFVMIGLIAGT), 334–354 (IFYLLVYLFMNLCGFTCIILF), 378–398 (LGLSIALLSLGGIPPLAGFFG), 410–432 (GLYWLVLLGLVTTVVSIYYYIRV), and 466–486 (VGLVITLIATSLAGILSNPLF).

This sequence belongs to the complex I subunit 2 family. NDH-1 can be composed of about 15 different subunits; different subcomplexes with different compositions have been identified which probably have different functions.

The protein resides in the cellular thylakoid membrane. The enzyme catalyses a plastoquinone + NADH + (n+1) H(+)(in) = a plastoquinol + NAD(+) + n H(+)(out). The catalysed reaction is a plastoquinone + NADPH + (n+1) H(+)(in) = a plastoquinol + NADP(+) + n H(+)(out). Functionally, NDH-1 shuttles electrons from an unknown electron donor, via FMN and iron-sulfur (Fe-S) centers, to quinones in the respiratory and/or the photosynthetic chain. The immediate electron acceptor for the enzyme in this species is believed to be plastoquinone. Couples the redox reaction to proton translocation, and thus conserves the redox energy in a proton gradient. Cyanobacterial NDH-1 also plays a role in inorganic carbon-concentration. The polypeptide is NAD(P)H-quinone oxidoreductase subunit 2 (Nostoc punctiforme (strain ATCC 29133 / PCC 73102)).